Reading from the N-terminus, the 279-residue chain is Virginiamycin B lyase (279 aa).

Position 215 (histidine 215) interacts with substrate. Glutamate 253 is a binding site for Mg(2+). Histidine 255 acts as the Proton acceptor in catalysis. Residue glutamate 270 participates in Mg(2+) binding.

Belongs to the Vgb family. In terms of assembly, monomer. Mg(2+) serves as cofactor.

Its function is as follows. Inactivates the type B streptogramin antibiotics by linearizing the lactone ring at the ester linkage, generating a free phenylglycine carboxylate and converting the threonyl moiety into 2-amino-butenoic acid. In Nocardia farcinica (strain IFM 10152), this protein is Virginiamycin B lyase.